The chain runs to 61 residues: Small ribosomal subunit protein uS14 (61 aa).

Zn(2+) is bound by residues cysteine 24, cysteine 27, cysteine 40, and cysteine 43.

It belongs to the universal ribosomal protein uS14 family. Zinc-binding uS14 subfamily. As to quaternary structure, part of the 30S ribosomal subunit. Contacts proteins S3 and S10. The cofactor is Zn(2+).

Its function is as follows. Binds 16S rRNA, required for the assembly of 30S particles and may also be responsible for determining the conformation of the 16S rRNA at the A site. This is Small ribosomal subunit protein uS14 from Brevibacillus brevis (strain 47 / JCM 6285 / NBRC 100599).